The following is a 218-amino-acid chain: Guanylate kinase (218 aa).

The Guanylate kinase-like domain maps to 17 to 196 (GVLLALSSPS…ALEKLNEILH (180 aa)). Residue 24 to 31 (SPSGAGKT) participates in ATP binding.

The protein belongs to the guanylate kinase family.

It is found in the cytoplasm. The enzyme catalyses GMP + ATP = GDP + ADP. Functionally, essential for recycling GMP and indirectly, cGMP. The sequence is that of Guanylate kinase from Maricaulis maris (strain MCS10) (Caulobacter maris).